We begin with the raw amino-acid sequence, 241 residues long: Acyl-protein thioesterase 1 (241 aa).

Active-site charge relay system residues include Ser122, Asp178, and His211.

This sequence belongs to the AB hydrolase superfamily. AB hydrolase 2 family.

Its subcellular location is the cytoplasm. The protein resides in the nucleus. It carries out the reaction S-hexadecanoyl-L-cysteinyl-[protein] + H2O = L-cysteinyl-[protein] + hexadecanoate + H(+). In terms of biological role, hydrolyzes fatty acids from S-acylated cysteine residues in proteins with a strong preference for palmitoylated G-alpha proteins over other acyl substrates. Mediates the deacylation of G-alpha proteins such as GPA1 in vivo, but has weak or no activity toward palmitoylated Ras proteins. Has weak lysophospholipase activity in vitro; however such activity may not exist in vivo. The sequence is that of Acyl-protein thioesterase 1 from Aspergillus fumigatus (strain ATCC MYA-4609 / CBS 101355 / FGSC A1100 / Af293) (Neosartorya fumigata).